The sequence spans 502 residues: ATP synthase subunit alpha (502 aa).

169 to 176 provides a ligand contact to ATP; that stretch reads GDRQTGKT.

The protein belongs to the ATPase alpha/beta chains family. F-type ATPases have 2 components, CF(1) - the catalytic core - and CF(0) - the membrane proton channel. CF(1) has five subunits: alpha(3), beta(3), gamma(1), delta(1), epsilon(1). CF(0) has three main subunits: a(1), b(2) and c(9-12). The alpha and beta chains form an alternating ring which encloses part of the gamma chain. CF(1) is attached to CF(0) by a central stalk formed by the gamma and epsilon chains, while a peripheral stalk is formed by the delta and b chains. The F(1)F(0) complex interacts with SpoIIIJ and YqjG; YqgA is found in the same complex.

Its subcellular location is the cell membrane. The protein resides in the membrane raft. It carries out the reaction ATP + H2O + 4 H(+)(in) = ADP + phosphate + 5 H(+)(out). Functionally, produces ATP from ADP in the presence of a proton gradient across the membrane. The alpha chain is a regulatory subunit. This is ATP synthase subunit alpha from Bacillus subtilis (strain 168).